A 354-amino-acid polypeptide reads, in one-letter code: Uroporphyrinogen decarboxylase (354 aa).

Residues 27-31 (RQAGR), Asp-77, Tyr-154, Thr-209, and His-327 each bind substrate.

Belongs to the uroporphyrinogen decarboxylase family. Homodimer.

Its subcellular location is the cytoplasm. It carries out the reaction uroporphyrinogen III + 4 H(+) = coproporphyrinogen III + 4 CO2. It participates in porphyrin-containing compound metabolism; protoporphyrin-IX biosynthesis; coproporphyrinogen-III from 5-aminolevulinate: step 4/4. Catalyzes the decarboxylation of four acetate groups of uroporphyrinogen-III to yield coproporphyrinogen-III. This chain is Uroporphyrinogen decarboxylase, found in Salmonella heidelberg (strain SL476).